Here is a 199-residue protein sequence, read N- to C-terminus: NAD(P)H dehydrogenase (quinone) (199 aa).

The region spanning 4-190 is the Flavodoxin-like domain; that stretch reads MLVLYYSAYG…DGARFQGRRV (187 aa). Residues 10-15 and 78-80 contribute to the FMN site; these read SAYGHM and TRY. Residue Y12 coordinates NAD(+). Position 98 (W98) interacts with substrate. FMN is bound by residues 113–119 and H134; that span reads STATQYG. The tract at residues 161 to 181 is disordered; the sequence is YGMTTTADGDGSRQPSAQELD. Polar residues predominate over residues 163-177; sequence MTTTADGDGSRQPSA.

It belongs to the WrbA family. Requires FMN as cofactor.

It carries out the reaction a quinone + NADH + H(+) = a quinol + NAD(+). The enzyme catalyses a quinone + NADPH + H(+) = a quinol + NADP(+). The chain is NAD(P)H dehydrogenase (quinone) from Brucella canis (strain ATCC 23365 / NCTC 10854 / RM-666).